A 264-amino-acid polypeptide reads, in one-letter code: 2-dehydro-3-deoxy-D-gluconate 5-dehydrogenase (264 aa).

NAD(+) is bound at residue 14–38 (LVTGSTHGLGMAMAKGLGLAGATIV). A substrate-binding site is contributed by S147. Y160 acts as the Proton acceptor in catalysis.

It belongs to the short-chain dehydrogenases/reductases (SDR) family. In terms of assembly, homotetramer.

The protein resides in the cytoplasm. It carries out the reaction 2-dehydro-3-deoxy-D-gluconate + NAD(+) = 3-deoxy-D-glycero-2,5-hexodiulosonate + NADH + H(+). Functionally, 2-dehydro-3-deoxy-D-gluconate 5-dehydrogenase involved in ulvan degradation. Ulvan is the main polysaccharide component of the Ulvales (green seaweed) cell wall. It is composed of disaccharide building blocks comprising 3-sulfated rhamnose (Rha3S) linked to D-glucuronic acid (GlcA), L-iduronic acid (IduA), or D-xylose (Xyl). Catalyzes the reversible reduction of 2,5-diketo-3-deoxygluconate (DKII or 4,6-dihydroxy-2,5-dioxohexanoate) into 2-keto-3-deoxygluconate (KDG or 2-dehydro-3-deoxygluconate) with a concomitant oxidation of NADH. This chain is 2-dehydro-3-deoxy-D-gluconate 5-dehydrogenase (kduD), found in Formosa agariphila (strain DSM 15362 / KCTC 12365 / LMG 23005 / KMM 3901 / M-2Alg 35-1).